The following is a 177-amino-acid chain: Large ribosomal subunit protein uL16m (177 aa).

It belongs to the universal ribosomal protein uL16 family.

The protein localises to the mitochondrion. This chain is Large ribosomal subunit protein uL16m (RPL16), found in Brassica napus (Rape).